A 187-amino-acid chain; its full sequence is Small ribosomal subunit protein uS7 (187 aa).

The protein belongs to the universal ribosomal protein uS7 family. Part of the 30S ribosomal subunit.

One of the primary rRNA binding proteins, it binds directly to 16S rRNA where it nucleates assembly of the head domain of the 30S subunit. Is located at the subunit interface close to the decoding center. The sequence is that of Small ribosomal subunit protein uS7 from Methanosphaera stadtmanae (strain ATCC 43021 / DSM 3091 / JCM 11832 / MCB-3).